A 419-amino-acid chain; its full sequence is L-rhamnose isomerase (419 aa).

3 residues coordinate Mn(2+): His262, Asp294, and Asp296.

The protein belongs to the rhamnose isomerase family. In terms of assembly, homotetramer. Requires Mn(2+) as cofactor.

The protein resides in the cytoplasm. The enzyme catalyses L-rhamnopyranose = L-rhamnulose. Its pathway is carbohydrate degradation; L-rhamnose degradation; glycerone phosphate from L-rhamnose: step 1/3. Functionally, catalyzes the interconversion of L-rhamnose and L-rhamnulose. The polypeptide is L-rhamnose isomerase (Escherichia coli O45:K1 (strain S88 / ExPEC)).